The following is a 115-amino-acid chain: Putative UPF0320 protein YKL225W (115 aa).

This sequence belongs to the UPF0320 family.

In Saccharomyces cerevisiae (strain ATCC 204508 / S288c) (Baker's yeast), this protein is Putative UPF0320 protein YKL225W.